Consider the following 282-residue polypeptide: Probable ribosomal RNA small subunit methyltransferase A (282 aa).

Residues histidine 24, leucine 26, glycine 51, glutamate 72, aspartate 100, and asparagine 115 each coordinate S-adenosyl-L-methionine.

It belongs to the class I-like SAM-binding methyltransferase superfamily. rRNA adenine N(6)-methyltransferase family. RsmA subfamily.

Its subcellular location is the cytoplasm. Functionally, specifically dimethylates two adjacent adenosines in the loop of a conserved hairpin near the 3'-end of 16S rRNA in the 30S particle. May play a critical role in biogenesis of 30S subunits. This chain is Probable ribosomal RNA small subunit methyltransferase A, found in Halobacterium salinarum (strain ATCC 29341 / DSM 671 / R1).